The primary structure comprises 659 residues: Exoribonuclease 2 (659 aa).

In terms of domain architecture, RNB spans 189-531 (RKDLTALHFV…NHRLIKACIA (343 aa)). In terms of domain architecture, S1 motif spans 576-658 (KPEFQAEVQD…ETRSLIGNLV (83 aa)).

The protein belongs to the RNR ribonuclease family. RNase II subfamily.

Its subcellular location is the cytoplasm. The catalysed reaction is Exonucleolytic cleavage in the 3'- to 5'-direction to yield nucleoside 5'-phosphates.. Its function is as follows. Involved in mRNA degradation. Hydrolyzes single-stranded polyribonucleotides processively in the 3' to 5' direction. In Actinobacillus succinogenes (strain ATCC 55618 / DSM 22257 / CCUG 43843 / 130Z), this protein is Exoribonuclease 2.